The primary structure comprises 473 residues: tRNA-2-methylthio-N(6)-dimethylallyladenosine synthase (473 aa).

The 121-residue stretch at 5 to 125 (RKLHIKSYGC…LPQLLARAKA (121 aa)) folds into the MTTase N-terminal domain. 6 residues coordinate [4Fe-4S] cluster: C14, C50, C88, C166, C170, and C173. The region spanning 152 to 384 (RARGISAFVT…QNLIDSQQSA (233 aa)) is the Radical SAM core domain. Residues 387-449 (RAAVGTTVDV…RYSLLGSLAS (63 aa)) enclose the TRAM domain. The segment covering 453–462 (SRASADDAPP) has biased composition (low complexity). The interval 453–473 (SRASADDAPPVGASSPAIMGV) is disordered.

This sequence belongs to the methylthiotransferase family. MiaB subfamily. As to quaternary structure, monomer. Requires [4Fe-4S] cluster as cofactor.

The protein localises to the cytoplasm. The catalysed reaction is N(6)-dimethylallyladenosine(37) in tRNA + (sulfur carrier)-SH + AH2 + 2 S-adenosyl-L-methionine = 2-methylsulfanyl-N(6)-dimethylallyladenosine(37) in tRNA + (sulfur carrier)-H + 5'-deoxyadenosine + L-methionine + A + S-adenosyl-L-homocysteine + 2 H(+). Its function is as follows. Catalyzes the methylthiolation of N6-(dimethylallyl)adenosine (i(6)A), leading to the formation of 2-methylthio-N6-(dimethylallyl)adenosine (ms(2)i(6)A) at position 37 in tRNAs that read codons beginning with uridine. This Nitrobacter hamburgensis (strain DSM 10229 / NCIMB 13809 / X14) protein is tRNA-2-methylthio-N(6)-dimethylallyladenosine synthase.